A 279-amino-acid chain; its full sequence is Tryptophan 2,3-dioxygenase (279 aa).

Substrate is bound by residues 48-52, Y110, and R114; that span reads FIVIH. H237 provides a ligand contact to heme. T251 serves as a coordination point for substrate.

The protein belongs to the tryptophan 2,3-dioxygenase family. As to quaternary structure, homotetramer. The cofactor is heme.

The enzyme catalyses L-tryptophan + O2 = N-formyl-L-kynurenine. It functions in the pathway amino-acid degradation; L-tryptophan degradation via kynurenine pathway; L-kynurenine from L-tryptophan: step 1/2. In terms of biological role, heme-dependent dioxygenase that catalyzes the oxidative cleavage of the L-tryptophan (L-Trp) pyrrole ring and converts L-tryptophan to N-formyl-L-kynurenine. Catalyzes the oxidative cleavage of the indole moiety. The chain is Tryptophan 2,3-dioxygenase from Bacillus cereus (strain ATCC 10987 / NRS 248).